We begin with the raw amino-acid sequence, 425 residues long: Serine--tRNA ligase (425 aa).

Residue 233–235 (TAE) participates in L-serine binding. 264–266 (RRE) contacts ATP. E287 is an L-serine binding site. 351–354 (EISS) lines the ATP pocket. An L-serine-binding site is contributed by S385.

Belongs to the class-II aminoacyl-tRNA synthetase family. Type-1 seryl-tRNA synthetase subfamily. As to quaternary structure, homodimer. The tRNA molecule binds across the dimer.

Its subcellular location is the cytoplasm. The catalysed reaction is tRNA(Ser) + L-serine + ATP = L-seryl-tRNA(Ser) + AMP + diphosphate + H(+). It catalyses the reaction tRNA(Sec) + L-serine + ATP = L-seryl-tRNA(Sec) + AMP + diphosphate + H(+). The protein operates within aminoacyl-tRNA biosynthesis; selenocysteinyl-tRNA(Sec) biosynthesis; L-seryl-tRNA(Sec) from L-serine and tRNA(Sec): step 1/1. Catalyzes the attachment of serine to tRNA(Ser). Is also able to aminoacylate tRNA(Sec) with serine, to form the misacylated tRNA L-seryl-tRNA(Sec), which will be further converted into selenocysteinyl-tRNA(Sec). This is Serine--tRNA ligase from Parasynechococcus marenigrum (strain WH8102).